The chain runs to 638 residues: DNA mismatch repair protein MutL (638 aa).

Residues 398-435 form a disordered region; that stretch reads GREGTSFGTQTNAFGSMATPRDNSRGSYSAGESRQRTE.

The protein belongs to the DNA mismatch repair MutL/HexB family.

This protein is involved in the repair of mismatches in DNA. It is required for dam-dependent methyl-directed DNA mismatch repair. May act as a 'molecular matchmaker', a protein that promotes the formation of a stable complex between two or more DNA-binding proteins in an ATP-dependent manner without itself being part of a final effector complex. The protein is DNA mismatch repair protein MutL of Shewanella baltica (strain OS155 / ATCC BAA-1091).